The chain runs to 73 residues: Large ribosomal subunit protein bL31 (73 aa).

This sequence belongs to the bacterial ribosomal protein bL31 family. Type A subfamily. As to quaternary structure, part of the 50S ribosomal subunit.

Functionally, binds the 23S rRNA. The chain is Large ribosomal subunit protein bL31 from Ruegeria sp. (strain TM1040) (Silicibacter sp.).